We begin with the raw amino-acid sequence, 244 residues long: Multiple organellar RNA editing factor 3, mitochondrial (244 aa).

The transit peptide at 1–62 (MALISTRRTL…GPCYISTRPK (62 aa)) directs the protein to the mitochondrion. Disordered regions lie at residues 59–82 (TRPK…SNRP) and 196–244 (YRFT…KPSA). A compositionally biased stretch (polar residues) spans 60–80 (RPKTSGSGYSPLNDPSPNWSN). Residues 210 to 226 (PRYDRRRETMQVERREP) are compositionally biased toward basic and acidic residues.

Belongs to the MORF family. Heterodimer with MORF1. Homodimer and heterodimers with MORF8/RIP1, MORF4/RIP4 and MORF5/RIP5.

The protein resides in the mitochondrion. In terms of biological role, involved in organellar RNA editing. Required for the processing of RNA editing sites in mitochondria. This Arabidopsis thaliana (Mouse-ear cress) protein is Multiple organellar RNA editing factor 3, mitochondrial.